Reading from the N-terminus, the 1548-residue chain is Dicer-like protein 1 (1548 aa).

A compositionally biased stretch (basic and acidic residues) spans 1–41; the sequence is MGDPAAHEMADLERGFSSEDDAEYRSGDDEASKFVENEPSK. The segment at 1–48 is disordered; sequence MGDPAAHEMADLERGFSSEDDAEYRSGDDEASKFVENEPSKRGKISQK. The region spanning 106 to 289 is the Helicase ATP-binding domain; the sequence is LFERAKQQNT…QAAIELEGLL (184 aa). Position 119–126 (119–126) interacts with ATP; it reads LDTGSGKT. The DEAH box signature appears at 232-235; the sequence is DEAH. Positions 428–589 constitute a Helicase C-terminal domain; that stretch reads TLSKLLEEYF…FCNTQPEDRL (162 aa). In terms of domain architecture, Dicer dsRNA-binding fold spans 624–718; the sequence is SLPILQAFLN…RSKFVEKRHV (95 aa). The PAZ domain occupies 871-1006; that stretch reads PLLRHVADRD…FVLEPMRISP (136 aa). RNase III domains follow at residues 1051–1197 and 1248–1411; these read LTKD…MTTR and AQKI…VDSK. Mg(2+)-binding residues include Glu-1288, Asp-1397, and Glu-1400. A DRBM domain is found at 1445–1518; sequence TFFTQYVFET…ARKALDKLRS (74 aa). Zn(2+) contacts are provided by Cys-1457, His-1489, Cys-1530, and Cys-1532.

Belongs to the helicase family. Dicer subfamily. The cofactor is Mg(2+). Mn(2+) is required as a cofactor.

Dicer-like endonuclease involved in cleaving double-stranded RNA in the RNA interference (RNAi) pathway. Produces 21 to 25 bp dsRNAs (siRNAs) which target the selective destruction of homologous RNAs leading to sequence-specific suppression of gene expression, called post-transcriptional gene silencing (PTGS). Part of a broad host defense response against viral infection and transposons. This is Dicer-like protein 1 (DCL-1) from Cryphonectria parasitica (Chestnut blight fungus).